Reading from the N-terminus, the 249-residue chain is NAD kinase (249 aa).

Asp45 serves as the catalytic Proton acceptor. NAD(+) is bound by residues 45-46 (DG), Arg50, 110-111 (NE), Asp138, and 149-154 (SGWGMS).

It belongs to the NAD kinase family. Requires a divalent metal cation as cofactor.

It localises to the cytoplasm. It carries out the reaction NAD(+) + ATP = ADP + NADP(+) + H(+). In terms of biological role, involved in the regulation of the intracellular balance of NAD and NADP, and is a key enzyme in the biosynthesis of NADP. Catalyzes specifically the phosphorylation on 2'-hydroxyl of the adenosine moiety of NAD to yield NADP. This Saccharolobus islandicus (strain Y.N.15.51 / Yellowstone #2) (Sulfolobus islandicus) protein is NAD kinase.